The following is a 388-amino-acid chain: Carbamoyl phosphate synthase small chain (388 aa).

Residues 1–198 (MSQDLLPGVT…WPEGYAKLDK (198 aa)) are CPSase. Residues serine 53, glycine 250, and glycine 252 each coordinate L-glutamine. The region spanning 202–388 (EVVVIDYGVK…RFAGLMDAAK (187 aa)) is the Glutamine amidotransferase type-1 domain. Cysteine 279 acts as the Nucleophile in catalysis. The L-glutamine site is built by leucine 280, glutamine 283, asparagine 321, glycine 323, and phenylalanine 324. Active-site residues include histidine 363 and glutamate 365.

It belongs to the CarA family. Composed of two chains; the small (or glutamine) chain promotes the hydrolysis of glutamine to ammonia, which is used by the large (or ammonia) chain to synthesize carbamoyl phosphate. Tetramer of heterodimers (alpha,beta)4.

It catalyses the reaction hydrogencarbonate + L-glutamine + 2 ATP + H2O = carbamoyl phosphate + L-glutamate + 2 ADP + phosphate + 2 H(+). It carries out the reaction L-glutamine + H2O = L-glutamate + NH4(+). Its pathway is amino-acid biosynthesis; L-arginine biosynthesis; carbamoyl phosphate from bicarbonate: step 1/1. It functions in the pathway pyrimidine metabolism; UMP biosynthesis via de novo pathway; (S)-dihydroorotate from bicarbonate: step 1/3. In terms of biological role, small subunit of the glutamine-dependent carbamoyl phosphate synthetase (CPSase). CPSase catalyzes the formation of carbamoyl phosphate from the ammonia moiety of glutamine, carbonate, and phosphate donated by ATP, constituting the first step of 2 biosynthetic pathways, one leading to arginine and/or urea and the other to pyrimidine nucleotides. The small subunit (glutamine amidotransferase) binds and cleaves glutamine to supply the large subunit with the substrate ammonia. This Caulobacter vibrioides (strain ATCC 19089 / CIP 103742 / CB 15) (Caulobacter crescentus) protein is Carbamoyl phosphate synthase small chain.